The primary structure comprises 172 residues: 3-hydroxydecanoyl-[acyl-carrier-protein] dehydratase (172 aa).

Residue His-71 is part of the active site.

This sequence belongs to the thioester dehydratase family. FabA subfamily. In terms of assembly, homodimer.

The protein localises to the cytoplasm. The enzyme catalyses a (3R)-hydroxyacyl-[ACP] = a (2E)-enoyl-[ACP] + H2O. The catalysed reaction is (3R)-hydroxydecanoyl-[ACP] = (2E)-decenoyl-[ACP] + H2O. It carries out the reaction (2E)-decenoyl-[ACP] = (3Z)-decenoyl-[ACP]. It functions in the pathway lipid metabolism; fatty acid biosynthesis. Functionally, necessary for the introduction of cis unsaturation into fatty acids. Catalyzes the dehydration of (3R)-3-hydroxydecanoyl-ACP to E-(2)-decenoyl-ACP and then its isomerization to Z-(3)-decenoyl-ACP. Can catalyze the dehydratase reaction for beta-hydroxyacyl-ACPs with saturated chain lengths up to 16:0, being most active on intermediate chain length. This is 3-hydroxydecanoyl-[acyl-carrier-protein] dehydratase from Escherichia coli O139:H28 (strain E24377A / ETEC).